The following is a 500-amino-acid chain: NAD(P)H-quinone oxidoreductase chain 4, chloroplastic (500 aa).

14 helical membrane-spanning segments follow: residues Phe-4–Leu-24, Tyr-35–Phe-55, Ile-87–Val-107, Leu-113–Ser-130, Leu-134–Met-154, Phe-167–Leu-187, Ile-211–His-231, His-242–Val-262, Ala-272–Ala-292, Ile-305–Asp-325, Gly-330–Gly-350, Leu-386–Thr-406, Ile-416–Met-436, and Leu-462–Val-482.

The protein belongs to the complex I subunit 4 family.

The protein localises to the plastid. It is found in the chloroplast thylakoid membrane. The catalysed reaction is a plastoquinone + NADH + (n+1) H(+)(in) = a plastoquinol + NAD(+) + n H(+)(out). It carries out the reaction a plastoquinone + NADPH + (n+1) H(+)(in) = a plastoquinol + NADP(+) + n H(+)(out). The protein is NAD(P)H-quinone oxidoreductase chain 4, chloroplastic of Olimarabidopsis pumila (Dwarf rocket).